The chain runs to 174 residues: MMKFMCIFICAVAAVSASGYGGRRPSYGSAPIGAYAYQVQPALTVKAIIPSYGGQRGYGHNQGGYEAAPIASAYGNADIGNQYGPVSGSRYGGAPPVDREAIALAKLALAAPSAGGPLVWREAPRRVQHAYGPSNYGAPQQRYARAEEAQGASAAAASSSVAGVAKKGYRKSSY.

The signal sequence occupies residues 1–17 (MMKFMCIFICAVAAVSA). Residues 154 to 165 (AAAASSSVAGVA) show a composition bias toward low complexity. The tract at residues 154–174 (AAAASSSVAGVAKKGYRKSSY) is disordered.

This sequence belongs to the chorion protein S15/S18 family.

The protein resides in the secreted. Functionally, chorion membrane (egg shell) protein; plays a role in protecting the egg from the environment. The protein is Chorion protein S18 (Cp18) of Drosophila subobscura (Fruit fly).